A 135-amino-acid chain; its full sequence is Global transcriptional regulator Spx 2 (135 aa).

Residue C10 is part of the active site.

Belongs to the ArsC family. Spx subfamily. Interacts with the C-terminal domain of the alpha subunit of the RNAP.

It localises to the cytoplasm. Its function is as follows. Global transcriptional regulator that plays a key role in stress response and exerts either positive or negative regulation of genes. Acts by interacting with the C-terminal domain of the alpha subunit of the RNA polymerase (RNAP). This interaction can enhance binding of RNAP to the promoter region of target genes and stimulate their transcription, or block interaction of RNAP with activator. This Oceanobacillus iheyensis (strain DSM 14371 / CIP 107618 / JCM 11309 / KCTC 3954 / HTE831) protein is Global transcriptional regulator Spx 2.